The sequence spans 189 residues: UPF0301 protein RAF_ORF0041 (189 aa).

This sequence belongs to the UPF0301 (AlgH) family.

The sequence is that of UPF0301 protein RAF_ORF0041 from Rickettsia africae (strain ESF-5).